A 106-amino-acid chain; its full sequence is uncharacterized protein (106 aa).

This is an uncharacterized protein from Escherichia coli O6:H1 (strain CFT073 / ATCC 700928 / UPEC).